The following is a 329-amino-acid chain: Porphobilinogen deaminase (329 aa).

The residue at position 250 (Cys-250) is an S-(dipyrrolylmethanemethyl)cysteine.

It belongs to the HMBS family. Monomer. It depends on dipyrromethane as a cofactor.

The enzyme catalyses 4 porphobilinogen + H2O = hydroxymethylbilane + 4 NH4(+). The protein operates within porphyrin-containing compound metabolism; protoporphyrin-IX biosynthesis; coproporphyrinogen-III from 5-aminolevulinate: step 2/4. Functionally, tetrapolymerization of the monopyrrole PBG into the hydroxymethylbilane pre-uroporphyrinogen in several discrete steps. The protein is Porphobilinogen deaminase of Burkholderia thailandensis (strain ATCC 700388 / DSM 13276 / CCUG 48851 / CIP 106301 / E264).